The primary structure comprises 880 residues: Valine--tRNA ligase (880 aa).

Residues 51–61 (PNVTGELHLGH) carry the 'HIGH' region motif. Positions 529–533 (KMSKT) match the 'KMSKS' region motif. Lys532 provides a ligand contact to ATP. Residues 815–854 (MSTMVDLEVEAKRVKAEISELEIQIERLSTRLSDEQFLAK) are a coiled coil.

It belongs to the class-I aminoacyl-tRNA synthetase family. ValS type 1 subfamily. Monomer.

It localises to the cytoplasm. The catalysed reaction is tRNA(Val) + L-valine + ATP = L-valyl-tRNA(Val) + AMP + diphosphate. Functionally, catalyzes the attachment of valine to tRNA(Val). As ValRS can inadvertently accommodate and process structurally similar amino acids such as threonine, to avoid such errors, it has a 'posttransfer' editing activity that hydrolyzes mischarged Thr-tRNA(Val) in a tRNA-dependent manner. The chain is Valine--tRNA ligase from Dehalococcoides mccartyi (strain CBDB1).